A 548-amino-acid chain; its full sequence is MAAKDVKFGSDARVKMLRGVNILADAVKVTLGPKGRNVVLDKSFGAPAITKDGVSVAREIELEDKFENMGAQMVKEVASKANDAAGDGTTTATVLAQSIVTEGLKAVAAGMNPMDLKRGIDKAVVAAVAELKKLSVPCSDSISIAQVGTISANSDETVGKLIAEAMDKVGKEGVITVEEGTGLEDELDVVEGMQFDRGYLSPYFINKPENGSVELENPYILLVDKKISNIRELLPVLEGVAKASKPLLIVAEDVEGEALATLVVNTMRGIVKVAAVKAPGFGDRRKAMLHDIAVLTNGNVISEEIGLELEKATLEDLGQAKRIVINKDTTTIIDGVGEEDAIKGRVSQINQQIKESTSDYDREKLQERVAKLAGGVAVIKVGAATEVEMKEKRARVDDALHATRAAVEEGVVAGGGVALVRVAAAIVGLKGDNEDQNVGIRVAMRAMEAPLRQIVDNSGEEPSVIANSVKAGEGNYGYNATTEQYGDMIAMGILDPTKVTRSALQFAASIAGLMITTECMITDLPKDDKADLGAAGGMGGMGGMGGMM.

ATP is bound by residues 30 to 33 (TLGP), K51, 87 to 91 (DGTTT), G415, and D495.

This sequence belongs to the chaperonin (HSP60) family. In terms of assembly, forms a cylinder of 14 subunits composed of two heptameric rings stacked back-to-back. Interacts with the co-chaperonin GroES.

The protein localises to the cytoplasm. The catalysed reaction is ATP + H2O + a folded polypeptide = ADP + phosphate + an unfolded polypeptide.. In terms of biological role, together with its co-chaperonin GroES, plays an essential role in assisting protein folding. The GroEL-GroES system forms a nano-cage that allows encapsulation of the non-native substrate proteins and provides a physical environment optimized to promote and accelerate protein folding. The polypeptide is Chaperonin GroEL (Photorhabdus laumondii subsp. laumondii (strain DSM 15139 / CIP 105565 / TT01) (Photorhabdus luminescens subsp. laumondii)).